Here is an 838-residue protein sequence, read N- to C-terminus: MKYDFKSVEKFYQDKWDFSVSKSGKQEKCYVLEMFPYPSGKIHMGHLRNYAIGDVIARYKRANGFEVLHPIGWDAFGLPAENAARDNNISPETWTKENIDNMRTQLKSIGLSYNWERELSTCEPDYYKHEQKFFLDFLKHGLAYRKESWVNWDPVDQTVLANEQVVDGKGWRSGAVVEKRKLSQWFLKITDFAEDLLKCLQSLKNWPEKVKTMQERWIGKSEGATIEFEVVGLNKKLKVFTTYPHTLFGASFCAVAAEHPIVQDLKNGSSVVIPVLDTGIQEIKSKRENDEKIGVYTGLNVKHPFLDKELPLYIANFVLMEYGEGAIFGCPAHDQRDFEFAQKYNLPIIPVISSAHLGVIPARDQNSYNGSQCQATQMTKEAYTGDGTMFNSEFLNGLMVSEAKEAIVKKFEEKKIGKKTINYRLHDWGVSRQRYWGCPIPIIYCKDCGTVPVPEKDLPVVLPIDVEFTSGGNPLDKHPTWKFVDCPKCGKQAERETDTFDTFFESSWYFAAFCSEDKSIDKDACNRFMPVDYYIGGIEHAILHLLYSRFFCRALTKCGYFDIKEPFSTLITQGMVCHATYKDENGKWLFPAEAKELIARGAKVQVGKVEKMSKSKKNTVDPNFIIEKYGADTARLFVLSDTPPEKDMEWSDDGVEGCSRYVNKLWRMVMQLRPVNIHYDNENVTGGLLEYRKKIHKLLHGLTDDLENCRLNCVVAKFREMTNLIAEIDVKTGKSLIDEGICILIRVIEPFIPHLAESLWQEIGGQPWPKADESLLVDDTVTIAVQINGKLRTTIKVAINLPQEELKKIAIDSVSSKIDQSKVRTVYAVPNKIVNIVI.

Residues 36–46 (PYPSGKIHMGH) carry the 'HIGH' region motif. Positions 611–615 (KMSKS) match the 'KMSKS' region motif. Lys614 provides a ligand contact to ATP.

Belongs to the class-I aminoacyl-tRNA synthetase family.

It is found in the cytoplasm. It catalyses the reaction tRNA(Leu) + L-leucine + ATP = L-leucyl-tRNA(Leu) + AMP + diphosphate. The chain is Leucine--tRNA ligase from Wolbachia pipientis wMel.